Reading from the N-terminus, the 387-residue chain is Protein TsgA homolog (387 aa).

A run of 12 helical transmembrane segments spans residues 11–31, 47–67, 76–96, 101–121, 134–154, 160–180, 205–225, 243–263, 271–291, 299–319, 331–351, and 358–378; these read WISF…GMIM, NIFT…SWLI, LIFG…STSI, INIF…TFII, LLLT…ISAY, ILWY…FILT, IILL…FISW, VLVS…SFII, MFIF…YSKS, IISL…LASL, LILF…SPIV, and TTLI…CIIF.

This sequence belongs to the major facilitator superfamily. TsgA family.

It is found in the cell membrane. This is Protein TsgA homolog from Buchnera aphidicola subsp. Schizaphis graminum (strain Sg).